Here is a 175-residue protein sequence, read N- to C-terminus: MAPAVMASSATTVAPFQGLKSTAGLPISCRSGSTGLSSVSNGGRIRCMQVWPIEGIKKFETLSYLPPLSTEALLKQVDYLIRSKWVPCLEFSKVGFVFREHNSSPGYYDGRYWTMWKLPMFGCTDATQVLNEVEEVKKEYPDAYVRVIGFDNMRQVQCVSFIAFRPPGCEESGKA.

Residues Met1 to Arg46 constitute a chloroplast transit peptide.

This sequence belongs to the RuBisCO small chain family. Heterohexadecamer of 8 large and 8 small subunits.

It is found in the plastid. The protein localises to the chloroplast. Its function is as follows. RuBisCO catalyzes two reactions: the carboxylation of D-ribulose 1,5-bisphosphate, the primary event in carbon dioxide fixation, as well as the oxidative fragmentation of the pentose substrate. Both reactions occur simultaneously and in competition at the same active site. Although the small subunit is not catalytic it is essential for maximal activity. The polypeptide is Ribulose bisphosphate carboxylase small subunit, chloroplastic 2 (Triticum aestivum (Wheat)).